The primary structure comprises 220 residues: Large ribosomal subunit protein bL21 (220 aa).

The segment at 109–158 is disordered; that stretch reads SKKVAAKPATSEEKAAEEKPAKAKKEAAEKGASPRETKAAPLFSAPEGEP. Basic and acidic residues predominate over residues 118 to 146; that stretch reads TSEEKAAEEKPAKAKKEAAEKGASPRETK.

This sequence belongs to the bacterial ribosomal protein bL21 family. In terms of assembly, part of the 50S ribosomal subunit. Contacts protein L20.

Its function is as follows. This protein binds to 23S rRNA in the presence of protein L20. This is Large ribosomal subunit protein bL21 from Chelativorans sp. (strain BNC1).